Here is a 351-residue protein sequence, read N- to C-terminus: Columbamine O-methyltransferase (351 aa).

Residues G198, D221, D241, M242, and K255 each coordinate S-adenosyl-L-methionine. The active-site Proton acceptor is the H259.

It belongs to the class I-like SAM-binding methyltransferase superfamily. Cation-independent O-methyltransferase family. COMT subfamily. Homodimer.

It carries out the reaction columbamine + S-adenosyl-L-methionine = palmatine + S-adenosyl-L-homocysteine + H(+). It catalyses the reaction (S)-tetrahydrocolumbamine + S-adenosyl-L-methionine = (S)-tetrahydropalmatine + S-adenosyl-L-homocysteine + H(+). The protein operates within alkaloid biosynthesis; palmatine biosynthesis; palmatine from columbamine: step 1/1. Catalyzes the conversion of tetrahydrocolumbamine to (S)-tetrahydropalmatine and of columbamine to palmatine, an isoquinoline alkaloid. The polypeptide is Columbamine O-methyltransferase (Coptis japonica (Japanese goldthread)).